An 84-amino-acid polypeptide reads, in one-letter code: Short neurotoxin SNTX-1 (84 aa).

An N-terminal signal peptide occupies residues Met1 to Cys21. 4 cysteine pairs are disulfide-bonded: Cys25–Cys46, Cys39–Cys63, Cys65–Cys76, and Cys77–Cys82.

This sequence belongs to the three-finger toxin family. Short-chain subfamily. Type I alpha-neurotoxin sub-subfamily. In terms of tissue distribution, expressed by the venom gland.

The protein resides in the secreted. Functionally, binds to muscle nicotinic acetylcholine receptor (nAChR) and inhibit acetylcholine from binding to the receptor, thereby impairing neuromuscular transmission. In Demansia vestigiata (Lesser black whip snake), this protein is Short neurotoxin SNTX-1.